The primary structure comprises 190 residues: MTVTPRLAHFVLQTNQLPAMTQWYIDVLGAHVVYENPAMCFLTTDEEHHRVALFGPPGGGLPERTPATVGLAHTAFTFPTLGDLIDKYLQLRDKGIEPRVPVQHGVTTSLYYRDPDGNMVELQIDNFATPEESTDYMHGEEYTTDTIGPSFNPLALAEAYKAGVPESELTTRAWALKTEQINVMERMLTP.

The VOC domain maps to 6-125 (RLAHFVLQTN…DGNMVELQID (120 aa)). Fe cation-binding residues include His9, His73, and Glu121.

This sequence belongs to the extradiol ring-cleavage dioxygenase family. As to quaternary structure, homohexamer. Requires Fe(2+) as cofactor.

It carries out the reaction biphenyl-2,3-diol + O2 = 2-hydroxy-6-oxo-6-phenylhexa-2,4-dienoate + H(+). It functions in the pathway xenobiotic degradation; biphenyl degradation; 2-hydroxy-2,4-pentadienoate and benzoate from biphenyl: step 3/4. The polypeptide is Biphenyl-2,3-diol 1,2-dioxygenase 3 (bphC3) (Rhodococcus globerulus).